A 1363-amino-acid chain; its full sequence is Vascular endothelial growth factor receptor 3 (1363 aa).

The first 24 residues, 1-24 (MQPGAALNLRLWLCLGLLQGLANG), serve as a signal peptide directing secretion. Residues 25–775 (YSMTPPTLNI…EGSEDKGSME (751 aa)) lie on the Extracellular side of the membrane. N-linked (GlcNAc...) asparagine glycans are attached at residues Asn-33, Asn-104, Asn-166, Asn-251, Asn-299, and Asn-411. Ig-like C2-type domains follow at residues 44-118 (GDSL…YIKA), 151-213 (KDSM…WGDQ), 230-326 (YDIQ…TEVI), 331-415 (PFIS…ISLE), 422-552 (PHIH…FYVT), 555-671 (PDGF…KYLS), and 678-764 (PRLT…ASVA). 2 cysteine pairs are disulfide-bonded: Cys-51–Cys-111 and Cys-158–Cys-206. Cys-252 and Cys-310 are disulfide-bonded. Intrachain disulfides connect Cys-445-Cys-534, Cys-466-Cys-486, and Cys-578-Cys-653. Residues Asn-515, Asn-527, Asn-582, Asn-594, Asn-683, and Asn-690 are each glycosylated (N-linked (GlcNAc...) asparagine). An intrachain disulfide couples Cys-699 to Cys-751. N-linked (GlcNAc...) asparagine glycosylation occurs at Asn-758. Residues 776 to 796 (IVILIGTGVIAVFFWVLLLLI) form a helical membrane-spanning segment. Residues 797 to 1363 (FCNMKRPAHA…GSTFFADSSY (567 aa)) are Cytoplasmic-facing. Tyr-830 and Tyr-833 each carry phosphotyrosine; by SRC. Residues 845 to 1173 (LHLGRVLGHG…DLVEILGDLL (329 aa)) form the Protein kinase domain. ATP is bound by residues 851–859 (LGHGAFGKV) and Lys-879. Asp-1037 serves as the catalytic Proton acceptor. Tyr-1063 carries the post-translational modification Phosphotyrosine; by autocatalysis and SRC. Residues Tyr-1068, Tyr-1230, Tyr-1231, and Tyr-1265 each carry the phosphotyrosine; by autocatalysis modification. Residues 1288–1330 (ESRHRPEGSFSCKGPGQHMDIPRGHPDPQGRRRRPTQGAQGGK) form a disordered region. Residues 1307–1317 (DIPRGHPDPQG) show a composition bias toward basic and acidic residues. Phosphotyrosine; by autocatalysis and SRC occurs at positions 1333 and 1337. The residue at position 1363 (Tyr-1363) is a Phosphotyrosine; by autocatalysis.

Belongs to the protein kinase superfamily. Tyr protein kinase family. CSF-1/PDGF receptor subfamily. As to quaternary structure, interacts with VEGFC and VEGFD. Monomer in the absence of bound VEGFC or VEGFD. Homodimer in the presence of bound VEGFC or VEGFD. Can also form a heterodimer with KDR. Interacts with PTPN14; the interaction is enhanced by stimulation with VEGFC. Interacts with CRK, GRB2, PTK2/FAK1, SHC1, PIK3R1 and PTPN11/SHP-2. Identified in a complex with SRC and ITGB1. Autophosphorylated on tyrosine residues upon ligand binding. Autophosphorylation occurs in trans, i.e. one subunit of the dimeric receptor phosphorylates tyrosine residues on the other subunit. Phosphorylation in response to H(2)O(2) is mediated by a process that requires SRC and PRKCD activity. Phosphorylation at Tyr-1068 is required for autophosphorylation at additional tyrosine residues. Phosphorylation at Tyr-1063 and Tyr-1337 is important for interaction with CRK and subsequent activation of MAPK8. Phosphorylation at Tyr-1230, Tyr-1231 and Tyr-1337 is important for interaction with GRB2 and subsequent activation of the AKT1 and MAPK1/ERK2 and/or MAPK3/ERK1 signaling pathways. In response to endothelial cell adhesion onto collagen, can also be phosphorylated in the absence of FLT4 kinase activity by SRC. In terms of tissue distribution, expressed in adult lung and liver, and in fetal liver, brain, intestine and placenta.

The protein localises to the cell membrane. The protein resides in the cytoplasm. Its subcellular location is the nucleus. The catalysed reaction is L-tyrosyl-[protein] + ATP = O-phospho-L-tyrosyl-[protein] + ADP + H(+). Its activity is regulated as follows. Present in an inactive conformation in the absence of bound ligand. Binding of VEGFC or VEGFD leads to dimerization and activation by autophosphorylation on tyrosine residues. Functionally, tyrosine-protein kinase that acts as a cell-surface receptor for VEGFC and VEGFD, and plays an essential role in adult lymphangiogenesis and in the development of the vascular network and the cardiovascular system during embryonic development. Promotes proliferation, survival and migration of endothelial cells, and regulates angiogenic sprouting. Signaling by activated FLT4 leads to enhanced production of VEGFC, and to a lesser degree VEGFA, thereby creating a positive feedback loop that enhances FLT4 signaling. Modulates KDR signaling by forming heterodimers. Mediates activation of the MAPK1/ERK2, MAPK3/ERK1 signaling pathway, of MAPK8 and the JUN signaling pathway, and of the AKT1 signaling pathway. Phosphorylates SHC1. Mediates phosphorylation of PIK3R1, the regulatory subunit of phosphatidylinositol 3-kinase. Promotes phosphorylation of MAPK8 at 'Thr-183' and 'Tyr-185', and of AKT1 at 'Ser-473'. The sequence is that of Vascular endothelial growth factor receptor 3 (Flt4) from Mus musculus (Mouse).